The following is a 500-amino-acid chain: Aspartyl/glutamyl-tRNA(Asn/Gln) amidotransferase subunit B (500 aa).

This sequence belongs to the GatB/GatE family. GatB subfamily. Heterotrimer of A, B and C subunits.

The catalysed reaction is L-glutamyl-tRNA(Gln) + L-glutamine + ATP + H2O = L-glutaminyl-tRNA(Gln) + L-glutamate + ADP + phosphate + H(+). It catalyses the reaction L-aspartyl-tRNA(Asn) + L-glutamine + ATP + H2O = L-asparaginyl-tRNA(Asn) + L-glutamate + ADP + phosphate + 2 H(+). Allows the formation of correctly charged Asn-tRNA(Asn) or Gln-tRNA(Gln) through the transamidation of misacylated Asp-tRNA(Asn) or Glu-tRNA(Gln) in organisms which lack either or both of asparaginyl-tRNA or glutaminyl-tRNA synthetases. The reaction takes place in the presence of glutamine and ATP through an activated phospho-Asp-tRNA(Asn) or phospho-Glu-tRNA(Gln). The protein is Aspartyl/glutamyl-tRNA(Asn/Gln) amidotransferase subunit B of Brucella ovis (strain ATCC 25840 / 63/290 / NCTC 10512).